The chain runs to 241 residues: Ribose-5-phosphate isomerase A (241 aa).

Substrate is bound by residues 28–31 (TGST), 83–86 (DGAD), and 96–99 (KGGG). Catalysis depends on glutamate 105, which acts as the Proton acceptor. Lysine 123 provides a ligand contact to substrate.

It belongs to the ribose 5-phosphate isomerase family. As to quaternary structure, homodimer.

It carries out the reaction aldehydo-D-ribose 5-phosphate = D-ribulose 5-phosphate. It participates in carbohydrate degradation; pentose phosphate pathway; D-ribose 5-phosphate from D-ribulose 5-phosphate (non-oxidative stage): step 1/1. Its function is as follows. Catalyzes the reversible conversion of ribose-5-phosphate to ribulose 5-phosphate. The polypeptide is Ribose-5-phosphate isomerase A (Rhodopseudomonas palustris (strain BisA53)).